A 493-amino-acid polypeptide reads, in one-letter code: MTTVRTRIAPSPTGDPHVGTAYIALFNYCFAKQHGGEFILRIEDTDQLRSTRESEQQIFDALRWLGIEWNEGPDVGGPHGPYRQSERGEIYAKYAKELVDAGHAFYCFCTAEELEQMRAEQQARGETPRYDGRALLLSAEEVQRRLDAGEPHVIRMKVPSEGICVVPDMLRGDVEIPWDRMDMQVLMKNDGLPTYFLANVVDDHLMGITHVLRGEEWLPSAPKLIKLYEYFGWEQPKLCYMPLLRNPDKSKLSKRKNPTSVTFYERMGFMPEAMLNYLGRMGWSMPDEREKFSLAEMVEHFDLSRISLGGPIFDIEKLSWLNGQWLRELPVEEFAARLQKWAFNSDYMMKIAPHVQGRVETFSQVAPLGGFFFEGALKLDAKLFESKKLSADQVRQVIQLILWKLESLRQWEKERITGCIQAVVEALELKLRDAMPLMFAAITGQASSVSVLDAMEILGPDLTRYRLRQALDLLGGVSKKENKEWEKLLASIG.

The short motif at 10–20 is the 'HIGH' region element; it reads PSPTGDPHVGT. The 'KMSKS' region signature appears at 251-255; sequence KLSKR. Lys254 provides a ligand contact to ATP.

The protein belongs to the class-I aminoacyl-tRNA synthetase family. Glutamate--tRNA ligase type 1 subfamily. As to quaternary structure, monomer.

Its subcellular location is the cytoplasm. It catalyses the reaction tRNA(Glu) + L-glutamate + ATP = L-glutamyl-tRNA(Glu) + AMP + diphosphate. Its function is as follows. Catalyzes the attachment of glutamate to tRNA(Glu) in a two-step reaction: glutamate is first activated by ATP to form Glu-AMP and then transferred to the acceptor end of tRNA(Glu). In Pseudomonas putida (strain ATCC 700007 / DSM 6899 / JCM 31910 / BCRC 17059 / LMG 24140 / F1), this protein is Glutamate--tRNA ligase.